We begin with the raw amino-acid sequence, 436 residues long: Trigger factor (436 aa).

In terms of domain architecture, PPIase FKBP-type spans 163 to 248 (GDRATIDFEG…VKKIEAAHLP (86 aa)).

This sequence belongs to the FKBP-type PPIase family. Tig subfamily.

Its subcellular location is the cytoplasm. The enzyme catalyses [protein]-peptidylproline (omega=180) = [protein]-peptidylproline (omega=0). Its function is as follows. Involved in protein export. Acts as a chaperone by maintaining the newly synthesized protein in an open conformation. Functions as a peptidyl-prolyl cis-trans isomerase. The chain is Trigger factor from Polaromonas sp. (strain JS666 / ATCC BAA-500).